The sequence spans 505 residues: ATP synthase subunit alpha (505 aa).

171–178 (GDRQTGKT) is a binding site for ATP.

It belongs to the ATPase alpha/beta chains family. F-type ATPases have 2 components, CF(1) - the catalytic core - and CF(0) - the membrane proton channel. CF(1) has five subunits: alpha(3), beta(3), gamma(1), delta(1), epsilon(1). CF(0) has three main subunits: a(1), b(2) and c(9-12). The alpha and beta chains form an alternating ring which encloses part of the gamma chain. CF(1) is attached to CF(0) by a central stalk formed by the gamma and epsilon chains, while a peripheral stalk is formed by the delta and b chains.

The protein resides in the cell inner membrane. It catalyses the reaction ATP + H2O + 4 H(+)(in) = ADP + phosphate + 5 H(+)(out). In terms of biological role, produces ATP from ADP in the presence of a proton gradient across the membrane. The alpha chain is a regulatory subunit. In Campylobacter hominis (strain ATCC BAA-381 / DSM 21671 / CCUG 45161 / LMG 19568 / NCTC 13146 / CH001A), this protein is ATP synthase subunit alpha.